The following is a 319-amino-acid chain: NADH-quinone oxidoreductase subunit H 1 (319 aa).

9 helical membrane passes run 1 to 21, 77 to 97, 107 to 127, 147 to 167, 179 to 199, 214 to 234, 238 to 258, 262 to 282, and 293 to 313; these read MIGL…LLVV, ILAP…VAFG, VGVL…MLGA, LAYE…AGSL, VWFV…GVAA, LVAG…FLGE, VLLV…GPWL, IWFG…RATL, and FAWK…GIVV.

It belongs to the complex I subunit 1 family. NDH-1 is composed of 14 different subunits. Subunits NuoA, H, J, K, L, M, N constitute the membrane sector of the complex.

It is found in the cell inner membrane. It catalyses the reaction a quinone + NADH + 5 H(+)(in) = a quinol + NAD(+) + 4 H(+)(out). In terms of biological role, NDH-1 shuttles electrons from NADH, via FMN and iron-sulfur (Fe-S) centers, to quinones in the respiratory chain. The immediate electron acceptor for the enzyme in this species is believed to be ubiquinone. Couples the redox reaction to proton translocation (for every two electrons transferred, four hydrogen ions are translocated across the cytoplasmic membrane), and thus conserves the redox energy in a proton gradient. This subunit may bind ubiquinone. The polypeptide is NADH-quinone oxidoreductase subunit H 1 (Rhodopseudomonas palustris (strain HaA2)).